The following is a 310-amino-acid chain: MVDGEDKIKLIIIVGPTASGKTELAVRLAERFDGEIVNADSMQVYRGMDIGTAKPSPQLRQRVPHHLVDIVTPDVNFSAADFRREAAAAIDDIHSRGKSVFVVGGTGLYIRALLQGLVDSPSGDESIRRELVELAQTVGNEELLRRLALVDPETAERLHPNDRLRIIRALEVYRQTGRPISTFRSEHGFADTYYDCLKIGLRVERQELYRRVESRVEVMIEQGLIAEVEGLLRAGYTPDLKSMRSIGYKEICAYLAGECTLDEAVQLIKRDTRHYAKRQMTWFNKDFEINWVEYPESFATICNHVIEFFA.

Position 15–22 (15–22 (GPTASGKT)) interacts with ATP. 17–22 (TASGKT) lines the substrate pocket. Residues 40 to 43 (DSMQ) form an interaction with substrate tRNA region.

It belongs to the IPP transferase family. In terms of assembly, monomer. The cofactor is Mg(2+).

The catalysed reaction is adenosine(37) in tRNA + dimethylallyl diphosphate = N(6)-dimethylallyladenosine(37) in tRNA + diphosphate. In terms of biological role, catalyzes the transfer of a dimethylallyl group onto the adenine at position 37 in tRNAs that read codons beginning with uridine, leading to the formation of N6-(dimethylallyl)adenosine (i(6)A). The sequence is that of tRNA dimethylallyltransferase 2 from Geotalea uraniireducens (strain Rf4) (Geobacter uraniireducens).